A 276-amino-acid chain; its full sequence is Phosphate import ATP-binding protein PstB (276 aa).

The ABC transporter domain maps to 23 to 271 (VNNKNIVYDT…PSDQRTEDYI (249 aa)). Position 62–69 (62–69 (GPSGCGKS)) interacts with ATP.

Belongs to the ABC transporter superfamily. Phosphate importer (TC 3.A.1.7) family. In terms of assembly, the complex is composed of two ATP-binding proteins (PstB), two transmembrane proteins (PstC and PstA) and a solute-binding protein (PstS).

It localises to the cell membrane. The enzyme catalyses phosphate(out) + ATP + H2O = ADP + 2 phosphate(in) + H(+). Part of the ABC transporter complex PstSACB involved in phosphate import. Responsible for energy coupling to the transport system. The sequence is that of Phosphate import ATP-binding protein PstB from Oceanobacillus iheyensis (strain DSM 14371 / CIP 107618 / JCM 11309 / KCTC 3954 / HTE831).